A 434-amino-acid polypeptide reads, in one-letter code: ATP-dependent protease ATPase subunit HslU (434 aa).

ATP contacts are provided by residues Val18, 60-65, Asp247, Glu312, and Arg384; that span reads GVGKTE.

It belongs to the ClpX chaperone family. HslU subfamily. In terms of assembly, a double ring-shaped homohexamer of HslV is capped on each side by a ring-shaped HslU homohexamer. The assembly of the HslU/HslV complex is dependent on binding of ATP.

Its subcellular location is the cytoplasm. In terms of biological role, ATPase subunit of a proteasome-like degradation complex; this subunit has chaperone activity. The binding of ATP and its subsequent hydrolysis by HslU are essential for unfolding of protein substrates subsequently hydrolyzed by HslV. HslU recognizes the N-terminal part of its protein substrates and unfolds these before they are guided to HslV for hydrolysis. This Phenylobacterium zucineum (strain HLK1) protein is ATP-dependent protease ATPase subunit HslU.